Consider the following 308-residue polypeptide: Isochorismatase domain-containing protein 1 (308 aa).

The protein belongs to the isochorismatase family.

This Xenopus tropicalis (Western clawed frog) protein is Isochorismatase domain-containing protein 1 (isoc1).